The chain runs to 60 residues: Large ribosomal subunit protein uL30 (60 aa).

The protein belongs to the universal ribosomal protein uL30 family. As to quaternary structure, part of the 50S ribosomal subunit.

The protein is Large ribosomal subunit protein uL30 of Streptomyces avermitilis (strain ATCC 31267 / DSM 46492 / JCM 5070 / NBRC 14893 / NCIMB 12804 / NRRL 8165 / MA-4680).